The primary structure comprises 649 residues: DNA ligase (649 aa).

NAD(+) contacts are provided by residues Asp62–Asp66 and Ser104–Thr105. The active-site N6-AMP-lysine intermediate is the Lys142. The NAD(+) site is built by Arg158, Glu189, and Lys301. Zn(2+) is bound by residues Cys389, Cys392, Cys405, and Cys411. In terms of domain architecture, BRCT spans Pro569–Tyr649.

The protein belongs to the NAD-dependent DNA ligase family. LigA subfamily. The cofactor is Mg(2+). It depends on Mn(2+) as a cofactor.

It carries out the reaction NAD(+) + (deoxyribonucleotide)n-3'-hydroxyl + 5'-phospho-(deoxyribonucleotide)m = (deoxyribonucleotide)n+m + AMP + beta-nicotinamide D-nucleotide.. Its function is as follows. DNA ligase that catalyzes the formation of phosphodiester linkages between 5'-phosphoryl and 3'-hydroxyl groups in double-stranded DNA using NAD as a coenzyme and as the energy source for the reaction. It is essential for DNA replication and repair of damaged DNA. The chain is DNA ligase from Psychromonas ingrahamii (strain DSM 17664 / CCUG 51855 / 37).